Here is a 150-residue protein sequence, read N- to C-terminus: MAKSGIYLGCFILILIQNMVAANPLFNRNNVQELENLKDLIHQLEERVAVNEEPEVYPESEDMKMDAEEEDAGISPGALRQSEENLLMNIVDRIAPESPLRSRFRDLAGLAKTAKSFNSCFGTRMDRIGSWSGLGCNSLKNGTKKKIFGN.

An N-terminal signal peptide occupies residues 1-21 (MAKSGIYLGCFILILIQNMVA). The interval 52-75 (EEPEVYPESEDMKMDAEEEDAGIS) is disordered. A disulfide bond links Cys120 and Cys136.

It belongs to the natriuretic peptide family. Heart ventricle, and to a lower extent in heart atrium.

The protein resides in the secreted. Its function is as follows. Exhibits natriuretic and vasodepressor activity. The sequence is that of Ventricular natriuretic peptide (vnp) from Anguilla japonica (Japanese eel).